The following is a 185-amino-acid chain: Proton-translocating ferredoxin:NAD(+) oxidoreductase complex subunit G (185 aa).

Residues 14-34 (TKNLTITCFISGIIIAAVYYI) form a helical membrane-spanning segment. An FMN phosphoryl threonine modification is found at Thr161.

This sequence belongs to the RnfG family. The complex is composed of six subunits: RnfA, RnfB, RnfC, RnfD, RnfE and RnfG. Requires FMN as cofactor.

It localises to the cell membrane. Its function is as follows. Part of a membrane-bound complex that couples electron transfer with translocation of ions across the membrane. Couples electron transfer from reduced ferredoxin to NAD(+) with translocation of H(+) out of the cell. Essential for energy conservation during autotrophic growth. Contributes to ATP synthesis during heterotrophic growth. The sequence is that of Proton-translocating ferredoxin:NAD(+) oxidoreductase complex subunit G from Clostridium ljungdahlii (strain ATCC 55383 / DSM 13528 / PETC).